We begin with the raw amino-acid sequence, 726 residues long: Long-chain-alcohol oxidase FAO4A (726 aa).

The helical transmembrane segment at 103-119 threads the bilayer; the sequence is ILLNWSSSYFSLLRMLF. 224–239 provides a ligand contact to FAD; the sequence is CDAVVVGSGSGGGVAA. The Proton acceptor role is filled by His-659.

It belongs to the GMC oxidoreductase family.

The protein localises to the membrane. The enzyme catalyses a long-chain primary fatty alcohol + O2 = a long-chain fatty aldehyde + H2O2. Long-chain fatty alcohol oxidase involved in the omega-oxidation pathway of lipid degradation. This chain is Long-chain-alcohol oxidase FAO4A (FAO4A), found in Arabidopsis thaliana (Mouse-ear cress).